Consider the following 283-residue polypeptide: Pantothenate synthetase (283 aa).

30–37 lines the ATP pocket; sequence MGNLHSGH. Residue histidine 37 is the Proton donor of the active site. Glutamine 61 serves as a coordination point for (R)-pantoate. Glutamine 61 is a binding site for beta-alanine. An ATP-binding site is contributed by 149–152; the sequence is GQKD. Glutamine 155 lines the (R)-pantoate pocket. ATP is bound by residues valine 178 and 186 to 189; that span reads LSSR.

It belongs to the pantothenate synthetase family. Homodimer.

It is found in the cytoplasm. The enzyme catalyses (R)-pantoate + beta-alanine + ATP = (R)-pantothenate + AMP + diphosphate + H(+). It functions in the pathway cofactor biosynthesis; (R)-pantothenate biosynthesis; (R)-pantothenate from (R)-pantoate and beta-alanine: step 1/1. Functionally, catalyzes the condensation of pantoate with beta-alanine in an ATP-dependent reaction via a pantoyl-adenylate intermediate. The polypeptide is Pantothenate synthetase (Pseudomonas fluorescens (strain SBW25)).